The chain runs to 181 residues: Ubiquitin-like protein 4B (181 aa).

The 76-residue stretch at 1–76 (MWLTVKLLLG…LNVIIRPLEK (76 aa)) folds into the Ubiquitin-like domain. Positions 139–181 (PEGKHSGATGSTRESKGDMEPRRNMKCNLAHKDGFKREKSPGK) are disordered. Basic and acidic residues-rich tracts occupy residues 151–161 (RESKGDMEPRR) and 168–181 (AHKD…SPGK).

The protein resides in the cytoplasm. This Monodelphis domestica (Gray short-tailed opossum) protein is Ubiquitin-like protein 4B (UBL4B).